A 167-amino-acid polypeptide reads, in one-letter code: Dual specificity protein phosphatase 1B (167 aa).

Residues 24 to 165 form the Tyrosine-protein phosphatase domain; it reads DLSEIQQGLF…LQQFEKSIQG (142 aa). Cys-109 serves as the catalytic Phosphocysteine intermediate.

This sequence belongs to the protein-tyrosine phosphatase family. Non-receptor class dual specificity subfamily. Associates with MPK3 and MPK6. Interacts with MPK6 is promoted during HR-like responses triggered by fungal elicitors, whereas interaction with MPK3 in repressed. As to expression, expressed in flowers, seedlings, roots, leaves, and seeds. Present in stomata and meristematic cells.

It is found in the nucleus. The protein resides in the cytoplasm. The catalysed reaction is O-phospho-L-tyrosyl-[protein] + H2O = L-tyrosyl-[protein] + phosphate. The enzyme catalyses O-phospho-L-seryl-[protein] + H2O = L-seryl-[protein] + phosphate. It catalyses the reaction O-phospho-L-threonyl-[protein] + H2O = L-threonyl-[protein] + phosphate. In terms of biological role, has a dual specificity toward Ser/Thr and Tyr-containing proteins. Prevents biotic and abiotic stress responses, including ozone, oxidative stress and pathogen attacks; represses MAPK activities during hypersensitive response to limit the spread of the HR response after infection by necrotrophic pathogen such as Botrytis cinerea. May be also involved in ABA and salt responses. Dephosphorylates MPK3 and MPK6. This chain is Dual specificity protein phosphatase 1B (DSPTP1B), found in Arabidopsis thaliana (Mouse-ear cress).